The chain runs to 324 residues: MPSSSAMAVGALSSSLLVTCCLMVALCSPSIPLEKLAQAPEQPGQEKREHASRDSPGRVSELGRASRDEGSSARDWKSKGSRALSGREAWSKQKQAWAAQGGSAKAADWQVRPRGDTPQGEPPAAAQEAISLELVPTPELPEEYAYPDYRGKGCVDESGFVYAIGEKFAPGPSACPCLCTEEGPLCAQPECPRLHPRCIHVDNSQCCPQCKEKKNYCEFRGKTYQTLEEFVVSPCERCRCEANGEVLCTVSACPQTECVDPVYEPDQCCPICKNGPNCFAETAVIPAGREVKTDECTICHCTYEEGTWRIERQAMCTRHECRQM.

Residues 1 to 27 (MPSSSAMAVGALSSSLLVTCCLMVALC) form the signal peptide. Residues 37–126 (AQAPEQPGQE…TPQGEPPAAA (90 aa)) form a disordered region. 2 stretches are compositionally biased toward basic and acidic residues: residues 44 to 56 (GQEK…RDSP) and 64 to 78 (RASR…DWKS). Positions 92–107 (KQKQAWAAQGGSAKAA) are enriched in low complexity. The Mediates cell adhesion motif lies at 114 to 116 (RGD). 2 VWFC domains span residues 152 to 211 (KGCV…PQCK) and 215 to 273 (NYCE…PICK).

Peripherally associated with AMPAR complex. AMPAR complex consists of an inner core made of 4 pore-forming GluA/GRIA proteins (GRIA1, GRIA2, GRIA3 and GRIA4) and 4 major auxiliary subunits arranged in a twofold symmetry. One of the two pairs of distinct binding sites is occupied either by CNIH2, CNIH3 or CACNG2, CACNG3. The other harbors CACNG2, CACNG3, CACNG4, CACNG8 or GSG1L. This inner core of AMPAR complex is complemented by outer core constituents binding directly to the GluA/GRIA proteins at sites distinct from the interaction sites of the inner core constituents. Outer core constituents include at least PRRT1, PRRT2, CKAMP44/SHISA9, FRRS1L and NRN1. The proteins of the inner and outer core serve as a platform for other, more peripherally associated AMPAR constituents, including VWC2. Alone or in combination, these auxiliary subunits control the gating and pharmacology of the AMPAR complex and profoundly impact their biogenesis and protein processing. Predominantly expressed in the brain (at protein level). It is expressed in the neurons but not the glial cells.

Its subcellular location is the secreted. The protein resides in the extracellular space. The protein localises to the extracellular matrix. It is found in the basement membrane. It localises to the synapse. BMP antagonist which may play a role in neural development. Promotes cell adhesion. In Mus musculus (Mouse), this protein is Brorin (Vwc2).